Here is a 112-residue protein sequence, read N- to C-terminus: UPF0251 protein MA_4245 (112 aa).

It belongs to the UPF0251 family.

The polypeptide is UPF0251 protein MA_4245 (Methanosarcina acetivorans (strain ATCC 35395 / DSM 2834 / JCM 12185 / C2A)).